The sequence spans 339 residues: Fe-S cluster assembly protein DRE2 (339 aa).

The N-terminal SAM-like domain stretch occupies residues 1–157 (MTRILLLLHP…KKLSSTHAAV (157 aa)). The segment at 158-206 (GLTDTSASNTDEENDDVNSKRKLQETKLAYFSESDDEDEEDQIIDENNL) is linker. [2Fe-2S] cluster-binding residues include cysteine 221, cysteine 233, cysteine 236, and cysteine 238. The segment at 221–238 (CELPNGKKRRKACKDCTC) is fe-S binding site A. The [4Fe-4S] cluster site is built by cysteine 302, cysteine 305, cysteine 313, and cysteine 316. 2 short sequence motifs (cx2C motif) span residues 302–305 (CSSC) and 313–316 (CDGC). The segment at 302-316 (CSSCSLGDAFRCDGC) is fe-S binding site B.

This sequence belongs to the anamorsin family. As to quaternary structure, monomer. Interacts with TAH18. Interacts with MIA40. [2Fe-2S] cluster is required as a cofactor. Requires [4Fe-4S] cluster as cofactor.

Its subcellular location is the cytoplasm. The protein localises to the mitochondrion intermembrane space. Component of the cytosolic iron-sulfur (Fe-S) protein assembly (CIA) machinery required for the maturation of extramitochondrial Fe-S proteins. Part of an electron transfer chain functioning in an early step of cytosolic Fe-S biogenesis, facilitating the de novo assembly of a [4Fe-4S] cluster on the scaffold complex CFD1-NBP35. Electrons are transferred to DRE2 from NADPH via the FAD- and FMN-containing protein TAH18. TAH18-DRE2 are also required for the assembly of the diferric tyrosyl radical cofactor of ribonucleotide reductase (RNR), probably by providing electrons for reduction during radical cofactor maturation in the catalytic small subunit RNR2. The polypeptide is Fe-S cluster assembly protein DRE2 (Debaryomyces hansenii (strain ATCC 36239 / CBS 767 / BCRC 21394 / JCM 1990 / NBRC 0083 / IGC 2968) (Yeast)).